The primary structure comprises 891 residues: Alanine--tRNA ligase (891 aa).

Zn(2+) contacts are provided by histidine 564, histidine 568, cysteine 677, and histidine 681.

Belongs to the class-II aminoacyl-tRNA synthetase family. The cofactor is Zn(2+).

The protein resides in the cytoplasm. The catalysed reaction is tRNA(Ala) + L-alanine + ATP = L-alanyl-tRNA(Ala) + AMP + diphosphate. In terms of biological role, catalyzes the attachment of alanine to tRNA(Ala) in a two-step reaction: alanine is first activated by ATP to form Ala-AMP and then transferred to the acceptor end of tRNA(Ala). Also edits incorrectly charged Ser-tRNA(Ala) and Gly-tRNA(Ala) via its editing domain. The protein is Alanine--tRNA ligase of Rhodopseudomonas palustris (strain BisA53).